Reading from the N-terminus, the 478-residue chain is Protein nucleotidyltransferase YdiU (478 aa).

ATP-binding residues include glycine 84, glycine 86, arginine 87, lysine 107, aspartate 119, glycine 120, arginine 170, and arginine 177. Catalysis depends on aspartate 246, which acts as the Proton acceptor. Asparagine 247 and aspartate 256 together coordinate Mg(2+). Residue aspartate 256 coordinates ATP.

Belongs to the SELO family. Mg(2+) is required as a cofactor. Requires Mn(2+) as cofactor.

It carries out the reaction L-seryl-[protein] + ATP = 3-O-(5'-adenylyl)-L-seryl-[protein] + diphosphate. The enzyme catalyses L-threonyl-[protein] + ATP = 3-O-(5'-adenylyl)-L-threonyl-[protein] + diphosphate. It catalyses the reaction L-tyrosyl-[protein] + ATP = O-(5'-adenylyl)-L-tyrosyl-[protein] + diphosphate. The catalysed reaction is L-histidyl-[protein] + UTP = N(tele)-(5'-uridylyl)-L-histidyl-[protein] + diphosphate. It carries out the reaction L-seryl-[protein] + UTP = O-(5'-uridylyl)-L-seryl-[protein] + diphosphate. The enzyme catalyses L-tyrosyl-[protein] + UTP = O-(5'-uridylyl)-L-tyrosyl-[protein] + diphosphate. Nucleotidyltransferase involved in the post-translational modification of proteins. It can catalyze the addition of adenosine monophosphate (AMP) or uridine monophosphate (UMP) to a protein, resulting in modifications known as AMPylation and UMPylation. In Shigella boydii serotype 4 (strain Sb227), this protein is Protein nucleotidyltransferase YdiU.